The chain runs to 703 residues: Polyribonucleotide nucleotidyltransferase (703 aa).

Residues aspartate 489 and aspartate 495 each contribute to the Mg(2+) site. The KH domain maps to proline 556–valine 615. Residues glycine 625–lysine 693 enclose the S1 motif domain.

It belongs to the polyribonucleotide nucleotidyltransferase family. Component of the RNA degradosome, which is a multiprotein complex involved in RNA processing and mRNA degradation. Requires Mg(2+) as cofactor.

The protein localises to the cytoplasm. It catalyses the reaction RNA(n+1) + phosphate = RNA(n) + a ribonucleoside 5'-diphosphate. Its function is as follows. Involved in mRNA degradation. Catalyzes the phosphorolysis of single-stranded polyribonucleotides processively in the 3'- to 5'-direction. In Pseudomonas fluorescens (strain ATCC BAA-477 / NRRL B-23932 / Pf-5), this protein is Polyribonucleotide nucleotidyltransferase.